Consider the following 158-residue polypeptide: Transcription elongation factor GreB (158 aa).

Residues 53-75 are a coiled coil; it reads KRRLREIDRRVRFLTKRLEVLQI.

This sequence belongs to the GreA/GreB family. GreB subfamily.

Its function is as follows. Necessary for efficient RNA polymerase transcription elongation past template-encoded arresting sites. The arresting sites in DNA have the property of trapping a certain fraction of elongating RNA polymerases that pass through, resulting in locked ternary complexes. Cleavage of the nascent transcript by cleavage factors such as GreA or GreB allows the resumption of elongation from the new 3'terminus. GreB releases sequences of up to 9 nucleotides in length. The chain is Transcription elongation factor GreB from Haemophilus influenzae (strain ATCC 51907 / DSM 11121 / KW20 / Rd).